The sequence spans 380 residues: Cytochrome b (380 aa).

The next 4 membrane-spanning stretches (helical) occupy residues 34 to 54, 78 to 99, 114 to 134, and 179 to 199; these read FGSL…LLAM, WLIR…YLHI, WNTG…GYVL, and FFAL…IHLT. Residues His-84 and His-98 each contribute to the heme b site. Residues His-183 and His-197 each coordinate heme b. His-202 is a binding site for a ubiquinone. The next 4 membrane-spanning stretches (helical) occupy residues 227–247, 289–309, 321–341, and 348–368; these read LKDI…ALFS, LGGV…PLLH, LSQL…WIGS, and FIII…VLFP.

It belongs to the cytochrome b family. The cytochrome bc1 complex contains 11 subunits: 3 respiratory subunits (MT-CYB, CYC1 and UQCRFS1), 2 core proteins (UQCRC1 and UQCRC2) and 6 low-molecular weight proteins (UQCRH/QCR6, UQCRB/QCR7, UQCRQ/QCR8, UQCR10/QCR9, UQCR11/QCR10 and a cleavage product of UQCRFS1). This cytochrome bc1 complex then forms a dimer. Heme b serves as cofactor.

Its subcellular location is the mitochondrion inner membrane. Functionally, component of the ubiquinol-cytochrome c reductase complex (complex III or cytochrome b-c1 complex) that is part of the mitochondrial respiratory chain. The b-c1 complex mediates electron transfer from ubiquinol to cytochrome c. Contributes to the generation of a proton gradient across the mitochondrial membrane that is then used for ATP synthesis. This Oceanodroma melania (Black storm-petrel) protein is Cytochrome b (MT-CYB).